The primary structure comprises 288 residues: Protease HtpX homolog (288 aa).

The next 2 membrane-spanning stretches (helical) occupy residues 7–27 and 29–49; these read TAVLMAAITALFIVVGGMLGG and QGMLMALLMAVGMNFFSYWFS. Zn(2+) is bound at residue histidine 131. Glutamate 132 is a catalytic residue. Position 135 (histidine 135) interacts with Zn(2+). 2 helical membrane passes run 141–161 and 177–197; these read ILISAVAATMAGAISALANFA and IASLMVAILAPIAASLIQMSI. Glutamate 202 contacts Zn(2+).

Belongs to the peptidase M48B family. Zn(2+) is required as a cofactor.

Its subcellular location is the cell inner membrane. The sequence is that of Protease HtpX homolog from Polynucleobacter necessarius subsp. necessarius (strain STIR1).